The chain runs to 772 residues: U3 small nucleolar RNA-associated protein 25 homolog (772 aa).

Residues 1 to 179 (MGKRRNRGRS…SEEFTDVKHE (179 aa)) are disordered. Promotes p53/TP53 degradation stretches follow at residues 1–201 (MGKR…SQRP) and 589–651 (VQLP…KKEE). Ser-10 bears the Phosphoserine mark. Over residues 25 to 43 (RDFGEEHPFYDRVSKKEAK) the composition is skewed to basic and acidic residues. Phosphoserine is present on residues Ser-52, Ser-60, and Ser-64. Basic and acidic residues predominate over residues 54–70 (DSSHSESESESEQEHVS). The segment covering 84-124 (EEEEEEEEEEEEEEEEEEEEEEEEEDDSAVGDAEMNEEAGS) has biased composition (acidic residues). Residues 127–136 (GSVGEAAVSE) are compositionally biased toward low complexity. Over residues 169–179 (SSEEFTDVKHE) the composition is skewed to basic and acidic residues. A represses p53/TP53 degradation region spans residues 652 to 713 (LNFTHICEYT…YELPTYPHFY (62 aa)).

It belongs to the UTP25 family. In terms of assembly, interacts with CAPN3; the interaction is required for CAPN3 translocation to the nucleolus. Phosphorylated. Phosphorylation is required to promote p53/TP53 degradation in the nucleolus which promotes cell cycle progression and liver development. As to expression, expressed in all tissues tested: brain, small intestine, large intestine, stomach, liver, spleen, thymus, lung, kidney and testes (at protein level).

Its subcellular location is the nucleus. It is found in the nucleolus. Component of the ribosomal small subunit processome for the biogenesis of ribosomes, functions in pre-ribosomal RNA (pre-rRNA) processing. Essential for embryonic development in part through the regulation of p53 pathway. Controls the expansion growth of digestive organs and liver. Also involved in the sympathetic neuronal development. Mediates, with CAPN3, the proteasome-independent degradation of p53/TP53. This chain is U3 small nucleolar RNA-associated protein 25 homolog, found in Mus musculus (Mouse).